The chain runs to 338 residues: Ferrochelatase (338 aa).

Fe cation contacts are provided by His-202 and Glu-283.

This sequence belongs to the ferrochelatase family.

Its subcellular location is the cytoplasm. It carries out the reaction heme b + 2 H(+) = protoporphyrin IX + Fe(2+). It participates in porphyrin-containing compound metabolism; protoheme biosynthesis; protoheme from protoporphyrin-IX: step 1/1. Its function is as follows. Catalyzes the ferrous insertion into protoporphyrin IX. In Acinetobacter baumannii (strain ATCC 17978 / DSM 105126 / CIP 53.77 / LMG 1025 / NCDC KC755 / 5377), this protein is Ferrochelatase.